The chain runs to 494 residues: UDP-N-acetylmuramate--L-alanine ligase (494 aa).

An ATP-binding site is contributed by 134-140 (GSHGKTT).

This sequence belongs to the MurCDEF family.

Its subcellular location is the cytoplasm. The enzyme catalyses UDP-N-acetyl-alpha-D-muramate + L-alanine + ATP = UDP-N-acetyl-alpha-D-muramoyl-L-alanine + ADP + phosphate + H(+). The protein operates within cell wall biogenesis; peptidoglycan biosynthesis. In terms of biological role, cell wall formation. In Prochlorococcus marinus (strain NATL1A), this protein is UDP-N-acetylmuramate--L-alanine ligase.